A 219-amino-acid chain; its full sequence is UPF0173 metal-dependent hydrolase Mhun_1705 (219 aa).

This sequence belongs to the UPF0173 family.

This chain is UPF0173 metal-dependent hydrolase Mhun_1705, found in Methanospirillum hungatei JF-1 (strain ATCC 27890 / DSM 864 / NBRC 100397 / JF-1).